Here is a 142-residue protein sequence, read N- to C-terminus: Large ribosomal subunit protein uL11 (142 aa).

It belongs to the universal ribosomal protein uL11 family. Part of the ribosomal stalk of the 50S ribosomal subunit. Interacts with L10 and the large rRNA to form the base of the stalk. L10 forms an elongated spine to which L12 dimers bind in a sequential fashion forming a multimeric L10(L12)X complex. Post-translationally, one or more lysine residues are methylated.

Its function is as follows. Forms part of the ribosomal stalk which helps the ribosome interact with GTP-bound translation factors. This chain is Large ribosomal subunit protein uL11, found in Aeromonas hydrophila subsp. hydrophila (strain ATCC 7966 / DSM 30187 / BCRC 13018 / CCUG 14551 / JCM 1027 / KCTC 2358 / NCIMB 9240 / NCTC 8049).